We begin with the raw amino-acid sequence, 236 residues long: Leucyl/phenylalanyl-tRNA--protein transferase (236 aa).

The protein belongs to the L/F-transferase family.

The protein localises to the cytoplasm. It carries out the reaction N-terminal L-lysyl-[protein] + L-leucyl-tRNA(Leu) = N-terminal L-leucyl-L-lysyl-[protein] + tRNA(Leu) + H(+). The catalysed reaction is N-terminal L-arginyl-[protein] + L-leucyl-tRNA(Leu) = N-terminal L-leucyl-L-arginyl-[protein] + tRNA(Leu) + H(+). The enzyme catalyses L-phenylalanyl-tRNA(Phe) + an N-terminal L-alpha-aminoacyl-[protein] = an N-terminal L-phenylalanyl-L-alpha-aminoacyl-[protein] + tRNA(Phe). Functionally, functions in the N-end rule pathway of protein degradation where it conjugates Leu, Phe and, less efficiently, Met from aminoacyl-tRNAs to the N-termini of proteins containing an N-terminal arginine or lysine. This Vibrio parahaemolyticus serotype O3:K6 (strain RIMD 2210633) protein is Leucyl/phenylalanyl-tRNA--protein transferase.